The primary structure comprises 100 residues: Small ribosomal subunit protein uS14c (100 aa).

It belongs to the universal ribosomal protein uS14 family. In terms of assembly, part of the 30S ribosomal subunit.

It localises to the plastid. Its subcellular location is the chloroplast. Functionally, binds 16S rRNA, required for the assembly of 30S particles. This is Small ribosomal subunit protein uS14c from Tupiella akineta (Green alga).